The following is a 514-amino-acid chain: MDKFQRDGKEYTSRQRRFLYPFLFKEDLYAIAIDHYFNRSSSFEPMENSSSNDRFSFLTVKRSISRMRQQNGSIVPFVNCNQKKLVGYNRSFYSELVLGGLTAVPEVPFSIRSKHSLEGMNEWTSFRSINSIFPLMEDKIPHSNFILDIRIPHLTHPEILVRTFRRWIQDAPFLHSLRFVLHEHRNLIISSNLDQLILIASKENTRLSLFLWNSYAYECESLLVPLWKRFSHSRSLPYESFVERTPFCRKIEHIIIFSHKYLKKSLWFLKDPSIHYVKYRERSIIALRGTYLLVKKWRYHLTNFWQCHFHLWLQPYRIYIDELSNNCFSFLGYLLSVKMNTSVVRIKMLDDSFITDLITKEFDPIAPTTLLIGSLAKEKFCDISGHPISRLAWTGLTDDDILDRFDRIWRNIFHYYSGSSKKDGLYRMKYILRLPCAKTLACKHKSAIRVVRERFGSELFTKSFPKERESIFLSFSKTRSQRERIWHSDIIQRNPLVNSWWKKHNFQIEPLFDR.

The protein belongs to the intron maturase 2 family. MatK subfamily.

It is found in the plastid. The protein localises to the chloroplast. Functionally, usually encoded in the trnK tRNA gene intron. Probably assists in splicing its own and other chloroplast group II introns. This is Maturase K from Zamia integrifolia (Coontie).